Reading from the N-terminus, the 47-residue chain is Defensin-like protein 2 (47 aa).

4 disulfides stabilise this stretch: Cys-3–Cys-47, Cys-14–Cys-36, Cys-20–Cys-41, and Cys-24–Cys-43.

It belongs to the DEFL family.

In Zea mays (Maize), this protein is Defensin-like protein 2.